We begin with the raw amino-acid sequence, 282 residues long: Heat stress transcription factor A-7b (282 aa).

2 stretches are compositionally biased toward low complexity: residues M1–S11 and S120–P134. Disordered regions lie at residues M1–A24 and R117–P139. Residues P26–S120 mediate DNA binding. The interval H137 to V196 is hydrophobic repeat HR-A/B. The Nuclear localization signal motif lies at Q208–R212. The short motif at L232–L240 is the Nuclear export signal element. The AHA motif lies at D259 to N268.

It belongs to the HSF family. Class A subfamily. As to quaternary structure, homotrimer. Post-translationally, exhibits temperature-dependent phosphorylation.

It is found in the cytoplasm. The protein localises to the nucleus. Functionally, transcriptional activator that specifically binds DNA sequence 5'-AGAAnnTTCT-3' known as heat shock promoter elements (HSE). This chain is Heat stress transcription factor A-7b (HSFA7B), found in Arabidopsis thaliana (Mouse-ear cress).